The following is a 269-amino-acid chain: Formamidopyrimidine-DNA glycosylase (269 aa).

The Schiff-base intermediate with DNA role is filled by Pro-2. Glu-3 (proton donor) is an active-site residue. Lys-57 functions as the Proton donor; for beta-elimination activity in the catalytic mechanism. DNA contacts are provided by His-90, Arg-109, and Arg-150. The segment at 235-269 adopts an FPG-type zinc-finger fold; sequence QVYGKAGEQCPNCAELIQELKIGQRNTFYCSSCQV. The active-site Proton donor; for delta-elimination activity is the Arg-259.

Belongs to the FPG family. As to quaternary structure, monomer. Requires Zn(2+) as cofactor.

It carries out the reaction Hydrolysis of DNA containing ring-opened 7-methylguanine residues, releasing 2,6-diamino-4-hydroxy-5-(N-methyl)formamidopyrimidine.. The enzyme catalyses 2'-deoxyribonucleotide-(2'-deoxyribose 5'-phosphate)-2'-deoxyribonucleotide-DNA = a 3'-end 2'-deoxyribonucleotide-(2,3-dehydro-2,3-deoxyribose 5'-phosphate)-DNA + a 5'-end 5'-phospho-2'-deoxyribonucleoside-DNA + H(+). Functionally, involved in base excision repair of DNA damaged by oxidation or by mutagenic agents. Acts as a DNA glycosylase that recognizes and removes damaged bases. Has a preference for oxidized purines, such as 7,8-dihydro-8-oxoguanine (8-oxoG). Has AP (apurinic/apyrimidinic) lyase activity and introduces nicks in the DNA strand. Cleaves the DNA backbone by beta-delta elimination to generate a single-strand break at the site of the removed base with both 3'- and 5'-phosphates. The chain is Formamidopyrimidine-DNA glycosylase from Vibrio atlanticus (strain LGP32) (Vibrio splendidus (strain Mel32)).